The sequence spans 460 residues: Argininosuccinate lyase (460 aa).

The protein belongs to the lyase 1 family. Argininosuccinate lyase subfamily.

Its subcellular location is the cytoplasm. The catalysed reaction is 2-(N(omega)-L-arginino)succinate = fumarate + L-arginine. It participates in amino-acid biosynthesis; L-arginine biosynthesis; L-arginine from L-ornithine and carbamoyl phosphate: step 3/3. The protein is Argininosuccinate lyase of Rhodopirellula baltica (strain DSM 10527 / NCIMB 13988 / SH1).